A 178-amino-acid polypeptide reads, in one-letter code: Large ribosomal subunit protein uL13m (178 aa).

The protein belongs to the universal ribosomal protein uL13 family. As to quaternary structure, component of the mitochondrial ribosome large subunit (39S) which comprises a 16S rRNA and about 50 distinct proteins.

The protein resides in the mitochondrion. The polypeptide is Large ribosomal subunit protein uL13m (mRpL13) (Drosophila melanogaster (Fruit fly)).